A 250-amino-acid polypeptide reads, in one-letter code: Small ribosomal subunit protein uS5 (250 aa).

The span at 1–22 (MNVVETSSEMNSNVEKASTPKQ) shows a compositional bias: polar residues. The segment at 1–40 (MNVVETSSEMNSNVEKASTPKQENNKRFERKSRPSSRQKV) is disordered. Residues 45–108 (FEEKVVTIRR…KEAKKNLVSV (64 aa)) enclose the S5 DRBM domain.

It belongs to the universal ribosomal protein uS5 family. Part of the 30S ribosomal subunit. Contacts proteins S4 and S8.

In terms of biological role, with S4 and S12 plays an important role in translational accuracy. Located at the back of the 30S subunit body where it stabilizes the conformation of the head with respect to the body. The sequence is that of Small ribosomal subunit protein uS5 from Mycoplasma capricolum subsp. capricolum (strain California kid / ATCC 27343 / NCTC 10154).